The primary structure comprises 43 residues: Protein PsbN (43 aa).

The chain crosses the membrane as a helical span at residues 5 to 27 (TLFAISISCLLVSFTGYALYTAF).

Belongs to the PsbN family.

The protein resides in the plastid. It is found in the chloroplast thylakoid membrane. Its function is as follows. May play a role in photosystem I and II biogenesis. The protein is Protein PsbN of Thuja plicata (Western red-cedar).